The sequence spans 994 residues: Translation initiation factor IF-2 (994 aa).

2 stretches are compositionally biased toward polar residues: residues 1-10 (MSDENNNGRN) and 28-40 (SVSS…SFSH). The tract at residues 1 to 405 (MSDENNNGRN…REKRKGGAQE (405 aa)) is disordered. The span at 76-91 (PQKPAGPAQAPRAPQG) shows a compositional bias: low complexity. The segment covering 98 to 131 (AEERAARQRAIELARQQEADRRAREERARAEAEA) has biased composition (basic and acidic residues). Low complexity predominate over residues 132-146 (ARAAQQKAAQAAAEP). Residues 147-157 (PAAPPPAPAAP) show a composition bias toward pro residues. A compositionally biased stretch (low complexity) spans 158 to 172 (PAAAAPAAPAAEAAP). Positions 173–188 (APKPAPSPRPVPPSAP) are enriched in pro residues. Over residues 189 to 204 (APQAARPAAEAPPRQA) the composition is skewed to low complexity. Composition is skewed to basic and acidic residues over residues 216–235 (PDRR…RPSN) and 247–273 (PRRD…DRPQ). The span at 298-310 (RGPGGPRGPGGPR) shows a compositional bias: gly residues. Basic and acidic residues-rich tracts occupy residues 336–350 (VDRR…RDPG) and 390–402 (RARE…RKGG). The region spanning 492-662 (PRPPVVAVMG…LLQAEVLDLK (171 aa)) is the tr-type G domain. The tract at residues 501-508 (GHVDHGKT) is G1. A GTP-binding site is contributed by 501–508 (GHVDHGKT). The interval 526–530 (GITQH) is G2. Residues 548–551 (DTPG) are G3. GTP-binding positions include 548-552 (DTPGH) and 602-605 (NKID). Positions 602–605 (NKID) are G4. Positions 638–640 (SAT) are G5.

This sequence belongs to the TRAFAC class translation factor GTPase superfamily. Classic translation factor GTPase family. IF-2 subfamily.

Its subcellular location is the cytoplasm. In terms of biological role, one of the essential components for the initiation of protein synthesis. Protects formylmethionyl-tRNA from spontaneous hydrolysis and promotes its binding to the 30S ribosomal subunits. Also involved in the hydrolysis of GTP during the formation of the 70S ribosomal complex. This chain is Translation initiation factor IF-2, found in Phenylobacterium zucineum (strain HLK1).